The primary structure comprises 92 residues: Large ribosomal subunit protein bL25 (92 aa).

It belongs to the bacterial ribosomal protein bL25 family. Part of the 50S ribosomal subunit; part of the 5S rRNA/L5/L18/L25 subcomplex. Contacts the 5S rRNA. Binds to the 5S rRNA independently of L5 and L18.

Functionally, this is one of the proteins that binds to the 5S RNA in the ribosome where it forms part of the central protuberance. The chain is Large ribosomal subunit protein bL25 from Vibrio vulnificus (strain CMCP6).